The chain runs to 247 residues: DNA polymerase sliding clamp (247 aa).

The protein belongs to the PCNA family. Homotrimer. The subunits circularize to form a toroid; DNA passes through its center. Replication factor C (RFC) is required to load the toroid on the DNA.

Sliding clamp subunit that acts as a moving platform for DNA processing. Responsible for tethering the catalytic subunit of DNA polymerase and other proteins to DNA during high-speed replication. This chain is DNA polymerase sliding clamp, found in Natronomonas pharaonis (strain ATCC 35678 / DSM 2160 / CIP 103997 / JCM 8858 / NBRC 14720 / NCIMB 2260 / Gabara) (Halobacterium pharaonis).